Here is a 233-residue protein sequence, read N- to C-terminus: 4'-phosphopantetheinyl transferase psf-1 (233 aa).

Mg(2+)-binding residues include Asp-110, Glu-112, and Glu-154. Positions 161-192 (GKGISYGLSSFTARLSEDGQATLRLPDHEAPC) are peptidyl carrier protein binding.

Belongs to the P-Pant transferase superfamily. Gsp/Sfp/HetI/AcpT family. It depends on Mg(2+) as a cofactor.

It carries out the reaction apo-[peptidyl-carrier protein] + CoA = holo-[peptidyl-carrier protein] + adenosine 3',5'-bisphosphate + H(+). Its function is as follows. Probably activates the peptidyl carrier protein (PCP) domains of surfactin synthetase by transferring the 4'-phosphopantetheinyl moiety of coenzyme A (CoA) to a serine residue. Required for the production of the lipopeptide antibiotic, surfactin. This chain is 4'-phosphopantetheinyl transferase psf-1 (psf-1), found in Bacillus pumilus (Bacillus mesentericus).